We begin with the raw amino-acid sequence, 428 residues long: C4-dicarboxylate transport protein (428 aa).

The next 8 helical transmembrane spans lie at 8 to 28 (SLYFQVLTAIAIGILLGHFYP), 44 to 64 (LIKMIIAPVIFCTVVTGIAGM), 76 to 96 (VALLYFEIVSTIALIIGLIIV), 142 to 162 (IGAFASGNILQVLLFAVLFGF), 184 to 204 (VIFGIINMIMRLAPIGAFGAM), 222 to 242 (LIICFYITCILFVVLVLGSIA), 326 to 346 (IVHQITLLIVLLLSSKGAAGV), and 352 to 372 (IVLAATLSAVGHLPVAGLALI).

It belongs to the dicarboxylate/amino acid:cation symporter (DAACS) (TC 2.A.23) family.

It localises to the cell inner membrane. In terms of biological role, responsible for the transport of dicarboxylates such as succinate, fumarate, and malate from the periplasm across the membrane. In Escherichia coli O127:H6 (strain E2348/69 / EPEC), this protein is C4-dicarboxylate transport protein.